A 471-amino-acid chain; its full sequence is Monocarboxylate transporter 4 (471 aa).

Topologically, residues 1 to 17 (MGGAVVDEGPTGIKAPD) are cytoplasmic. The helical transmembrane segment at 18–38 (GGWGWAVLFGCFIITGFSYAF) threads the bilayer. The Extracellular segment spans residues 39–61 (PKAVSVFFKELMHEFGIGYSDTA). Residues 62-82 (WISSILLAMLYGTGPLCSMCV) traverse the membrane as a helical segment. Residues 83–84 (NR) lie on the Cytoplasmic side of the membrane. Residues 85-105 (FGCRPVMLVGGLFASLGMVAA) form a helical membrane-spanning segment. Topologically, residues 106–109 (SFCR) are extracellular. Residues 110–130 (SIIQIYLTTGVITGLGLALNF) traverse the membrane as a helical segment. Residues 131–149 (QPSLIMLNRYFNKRRPMAN) lie on the Cytoplasmic side of the membrane. The chain crosses the membrane as a helical span at residues 150–170 (GLAAAGSPVFLCALSPLGQLL). Residues 171–179 (QDHYGWRGG) are Extracellular-facing. Residues 180–200 (FLILGGLLLNCCVCAALMRPL) form a helical membrane-spanning segment. Residues 201–231 (VAPQASGGAEPHGPQRPSPRLLDLSVFRDRG) lie on the Cytoplasmic side of the membrane. Residues 232–252 (FLIYAVAASIMVLGLFVPPVF) traverse the membrane as a helical segment. The Extracellular segment spans residues 253-267 (VVSYAKDMGVPDTKA). Residues 268 to 288 (AFLLTILGFIDIFARPTAGFI) form a helical membrane-spanning segment. Residues 289 to 298 (TGLKKVRPYS) are Cytoplasmic-facing. The chain crosses the membrane as a helical span at residues 299 to 319 (VYLFSFAMFFNGFTDLTGSTA). Residues 320–321 (SD) lie on the Extracellular side of the membrane. The chain crosses the membrane as a helical span at residues 322–342 (YGGLVVFCIFFGISYGMVGAL). Topologically, residues 343–355 (QFEVLMAIVGTQK) are cytoplasmic. The chain crosses the membrane as a helical span at residues 356–376 (FSSAIGLVLLLEAVAVLIGPP). Residues 377–391 (SGGKLLDATKVYKYV) are Extracellular-facing. A helical transmembrane segment spans residues 392–412 (FILAGAEVLTSSLVLLLGNFF). The Cytoplasmic segment spans residues 413–471 (CIGKRKRPEVTKPEEVASEEEKLHKPPVDVRVDSREVEHFLKAEPEKNGEVVHTPETSV). 2 basolateral sorting signal regions span residues 429-447 (ASEE…VDSR) and 447-471 (REVE…ETSV). Ser430 is subject to Phosphoserine. Thr466 is modified (phosphothreonine). Ser470 bears the Phosphoserine mark.

This sequence belongs to the major facilitator superfamily. Monocarboxylate porter (TC 2.A.1.13) family. In terms of assembly, interacts with BSG; interaction mediates SLC16A3 targeting to the plasma membrane. As to expression, detected in testis, small intestine, parotid gland, lung and brain. Small amounts are detected in heart, kidney and spleen. Expressed in skeletal muscle.

The protein localises to the cell membrane. The protein resides in the basolateral cell membrane. It catalyses the reaction (S)-lactate(in) + H(+)(in) = (S)-lactate(out) + H(+)(out). The enzyme catalyses pyruvate(out) + H(+)(out) = pyruvate(in) + H(+)(in). In terms of biological role, proton-dependent transporter of monocarboxylates such as L-lactate and pyruvate. Plays a predominant role in the L-lactate efflux from highly glycolytic cells. This chain is Monocarboxylate transporter 4 (Slc16a3), found in Rattus norvegicus (Rat).